The sequence spans 132 residues: MGNDTIANMITSIRNANLGKIKTVQVPATNITRNIAKILFQEGFIDNFIDNKQNTKDILILNLKYQGKKKKSYITTLRRISKPGLRIYSNHKEIPKVLGGMGIVILSTSRGIMTDREARQKKIGGELLCYVW.

It belongs to the universal ribosomal protein uS8 family. In terms of assembly, part of the 30S ribosomal subunit.

Its subcellular location is the plastid. The protein resides in the chloroplast. In terms of biological role, one of the primary rRNA binding proteins, it binds directly to 16S rRNA central domain where it helps coordinate assembly of the platform of the 30S subunit. The polypeptide is Small ribosomal subunit protein uS8c (rps8) (Marchantia polymorpha (Common liverwort)).